Consider the following 251-residue polypeptide: HTH-type transcriptional regulator UlaR (251 aa).

One can recognise an HTH deoR-type domain in the interval 3 to 58 (EAQRHQILLEMLAQLGFVTVEKVVERLGISPATARRDINKLDESGKLKKVRNGAEA). The segment at residues 20 to 39 (VTVEKVVERLGISPATARRD) is a DNA-binding region (H-T-H motif).

The protein localises to the cytoplasm. Functionally, represses ulaG and the ulaABCDEF operon. The chain is HTH-type transcriptional regulator UlaR from Escherichia coli O127:H6 (strain E2348/69 / EPEC).